The primary structure comprises 63 residues: Beta-defensin 38 (63 aa).

The signal sequence occupies residues 1–21; that stretch reads MKISCFLLLILSLYFFQINQA. 3 cysteine pairs are disulfide-bonded: Cys-29–Cys-58, Cys-36–Cys-51, and Cys-41–Cys-59.

The protein belongs to the beta-defensin family. In terms of tissue distribution, only expressed in epididymis (caput, corpus and cauda).

The protein localises to the secreted. Its function is as follows. Synthetic Defb38 kills both Gram-negative (E.coli and P.aeruginosa) and Gram-positive (E.faecium) bacteria. The protein is Beta-defensin 38 (Defb38) of Mus musculus (Mouse).